An 870-amino-acid chain; its full sequence is Eukaryotic translation initiation factor 3 subunit C (870 aa).

Positions 1-92 (MSRFFRGDSS…GVKVVKSAKN (92 aa)) are disordered. Residues 14 to 54 (SSDEEEDLYSDDEEVQEQPEEESEEDDSEEDDDDDDSDSSS) show a composition bias toward acidic residues. The 175-residue stretch at 608–782 (FHMHINLELL…SSIIFRKGVE (175 aa)) folds into the PCI domain. Residues 807–870 (TLETRTQGTA…ALGAAVGSRA (64 aa)) form a disordered region. Positions 824-844 (GRGGRGGNRGGRGGNRGGRGG) are enriched in gly residues.

Belongs to the eIF-3 subunit C family. Component of the eukaryotic translation initiation factor 3 (eIF-3) complex.

It is found in the cytoplasm. Component of the eukaryotic translation initiation factor 3 (eIF-3) complex, which is involved in protein synthesis of a specialized repertoire of mRNAs and, together with other initiation factors, stimulates binding of mRNA and methionyl-tRNAi to the 40S ribosome. The eIF-3 complex specifically targets and initiates translation of a subset of mRNAs involved in cell proliferation. This is Eukaryotic translation initiation factor 3 subunit C (nip1) from Sclerotinia sclerotiorum (strain ATCC 18683 / 1980 / Ss-1) (White mold).